The primary structure comprises 25 residues: Aggression-stimulating peptide (25 aa).

In terms of tissue distribution, expressed by the skin glands of male frogs.

Its subcellular location is the secreted. In terms of biological role, stimulates aggressive behavior in male frogs. No effect on female frogs. In Leptodactylus fallax (Mountain chicken frog), this protein is Aggression-stimulating peptide.